The sequence spans 287 residues: ATP synthase gamma chain (287 aa).

This sequence belongs to the ATPase gamma chain family. As to quaternary structure, F-type ATPases have 2 components, CF(1) - the catalytic core - and CF(0) - the membrane proton channel. CF(1) has five subunits: alpha(3), beta(3), gamma(1), delta(1), epsilon(1). CF(0) has three main subunits: a, b and c.

The protein localises to the cell inner membrane. Produces ATP from ADP in the presence of a proton gradient across the membrane. The gamma chain is believed to be important in regulating ATPase activity and the flow of protons through the CF(0) complex. The sequence is that of ATP synthase gamma chain from Parabacteroides distasonis (strain ATCC 8503 / DSM 20701 / CIP 104284 / JCM 5825 / NCTC 11152).